A 397-amino-acid polypeptide reads, in one-letter code: Succinate--CoA ligase [ADP-forming] subunit beta (397 aa).

The ATP-grasp domain occupies 9–254 (KELLRGYGAP…TSEEDEKEIE (246 aa)). Residues lysine 46, 53–55 (GRG), glutamate 109, alanine 112, and glutamate 117 each bind ATP. Mg(2+) contacts are provided by asparagine 209 and aspartate 223. Residues asparagine 274 and 331 to 333 (GIM) contribute to the substrate site.

Belongs to the succinate/malate CoA ligase beta subunit family. In terms of assembly, heterotetramer of two alpha and two beta subunits. It depends on Mg(2+) as a cofactor.

It carries out the reaction succinate + ATP + CoA = succinyl-CoA + ADP + phosphate. It catalyses the reaction GTP + succinate + CoA = succinyl-CoA + GDP + phosphate. It participates in carbohydrate metabolism; tricarboxylic acid cycle; succinate from succinyl-CoA (ligase route): step 1/1. In terms of biological role, succinyl-CoA synthetase functions in the citric acid cycle (TCA), coupling the hydrolysis of succinyl-CoA to the synthesis of either ATP or GTP and thus represents the only step of substrate-level phosphorylation in the TCA. The beta subunit provides nucleotide specificity of the enzyme and binds the substrate succinate, while the binding sites for coenzyme A and phosphate are found in the alpha subunit. The protein is Succinate--CoA ligase [ADP-forming] subunit beta of Chelativorans sp. (strain BNC1).